A 585-amino-acid polypeptide reads, in one-letter code: YTH domain-containing family protein 3 (585 aa).

Disordered regions lie at residues 1 to 51, 244 to 277, and 304 to 350; these read MSAT…SYPP, KPAK…MNIG, and PQPL…QPQL. Ser-2 carries the post-translational modification N-acetylserine. A compositionally biased stretch (polar residues) spans 15 to 24; it reads NKVSVQNGSI. Ser-23 carries the post-translational modification Phosphoserine. Residues 244-254 show a composition bias toward basic residues; the sequence is KPAKPQPKLKP. Residues 329-350 are compositionally biased toward low complexity; that stretch reads QQQQGPQPQAQPHQVQSQQPQL. The YTH domain occupies 416-550; it reads GRVFIIKSYS…EKAKQVLKII (135 aa). RNA-binding positions include 422 to 424, Asp-428, 438 to 439, Asn-468, Trp-492, and Trp-497; these read KSY and WC.

It belongs to the YTHDF family. YTHDF3 subfamily. In terms of assembly, interacts with CNOT1; promoting recruitment of the CCR4-NOT complex. Interacts with YTHDF1. Interacts with YTHDF2. Interacts with PAN3.

It is found in the cytoplasm. Its subcellular location is the cytosol. The protein localises to the P-body. The protein resides in the stress granule. Its function is as follows. Specifically recognizes and binds N6-methyladenosine (m6A)-containing RNAs, and regulates their stability. M6A is a modification present at internal sites of mRNAs and some non-coding RNAs and plays a role in mRNA stability and processing. Acts as a regulator of mRNA stability by promoting degradation of m6A-containing mRNAs via interaction with the CCR4-NOT complex or PAN3. The YTHDF paralogs (YTHDF1, YTHDF2 and YTHDF3) share m6A-containing mRNAs targets and act redundantly to mediate mRNA degradation and cellular differentiation. Acts as a negative regulator of type I interferon response by down-regulating interferon-stimulated genes (ISGs) expression: acts by binding to FOXO3 mRNAs. Binds to FOXO3 mRNAs independently of METTL3-mediated m6A modification. Can also act as a regulator of mRNA stability in cooperation with YTHDF2 by binding to m6A-containing mRNA and promoting their degradation. Recognizes and binds m6A-containing circular RNAs (circRNAs); circRNAs are generated through back-splicing of pre-mRNAs, a non-canonical splicing process promoted by dsRNA structures across circularizing exons. Promotes formation of phase-separated membraneless compartments, such as P-bodies or stress granules, by undergoing liquid-liquid phase separation upon binding to mRNAs containing multiple m6A-modified residues: polymethylated mRNAs act as a multivalent scaffold for the binding of YTHDF proteins, juxtaposing their disordered regions and thereby leading to phase separation. The resulting mRNA-YTHDF complexes then partition into different endogenous phase-separated membraneless compartments, such as P-bodies, stress granules or neuronal RNA granules. May also recognize and bind N1-methyladenosine (m1A)-containing mRNAs: inhibits trophoblast invasion by binding to m1A-methylated transcripts of IGF1R, promoting their degradation. In Mus musculus (Mouse), this protein is YTH domain-containing family protein 3.